A 780-amino-acid chain; its full sequence is Ral guanine nucleotide dissociation stimulator-like 2 (780 aa).

A disordered region spans residues methionine 1–arginine 92. At serine 13 the chain carries Phosphoserine. The span at glycine 31–glycine 42 shows a compositional bias: gly residues. Residues glutamine 43–glycine 65 show a composition bias toward acidic residues. The region spanning serine 89 to arginine 213 is the N-terminal Ras-GEF domain. The Ras-GEF domain maps to leucine 244–proline 516. The segment covering histidine 596 to proline 613 has biased composition (low complexity). 2 disordered regions span residues histidine 596–aspartate 651 and threonine 741–lysine 769. Positions aspartate 651–arginine 738 constitute a Ras-associating domain. Low complexity predominate over residues threonine 741–serine 758.

Interacts with SAMD9.

In terms of biological role, probable guanine nucleotide exchange factor. Putative effector of Ras and/or Rap. Associates with the GTP-bound form of Rap 1A and H-Ras in vitro. The chain is Ral guanine nucleotide dissociation stimulator-like 2 (RGL2) from Canis lupus familiaris (Dog).